The following is a 207-amino-acid chain: Outer-membrane lipoprotein LolB (207 aa).

The first 21 residues, 1–21 (MPLPDFRLIRLLPLAALVLTA), serve as a signal peptide directing secretion. Cysteine 22 carries N-palmitoyl cysteine lipidation. Cysteine 22 is lipidated: S-diacylglycerol cysteine.

The protein belongs to the LolB family. Monomer.

Its subcellular location is the cell outer membrane. Functionally, plays a critical role in the incorporation of lipoproteins in the outer membrane after they are released by the LolA protein. The sequence is that of Outer-membrane lipoprotein LolB from Escherichia coli (strain SMS-3-5 / SECEC).